A 775-amino-acid polypeptide reads, in one-letter code: Subtilisin-like protease SBT1.5 (775 aa).

Residues Met-1 to Ser-19 form the signal peptide. Positions Ala-20–His-103 are cleaved as a propeptide — activation peptide. Residues Thr-27–His-103 form the Inhibitor I9 domain. Residues Ser-107–Met-617 form the Peptidase S8 domain. The active-site Charge relay system is Asp-137. A glycan (N-linked (GlcNAc...) asparagine) is linked at Asn-196. His-210 (charge relay system) is an active-site residue. Residues Met-367–Arg-459 enclose the PA domain. The active-site Charge relay system is the Ser-549. Asn-599, Asn-638, and Asn-762 each carry an N-linked (GlcNAc...) asparagine glycan.

It belongs to the peptidase S8 family.

The protein resides in the secreted. In Arabidopsis thaliana (Mouse-ear cress), this protein is Subtilisin-like protease SBT1.5.